The chain runs to 97 residues: YcgL domain-containing protein PputW619_3899 (97 aa).

The YcgL domain maps to 3–87 (RICSIYKSPR…AEDEYIEHLP (85 aa)).

The polypeptide is YcgL domain-containing protein PputW619_3899 (Pseudomonas putida (strain W619)).